We begin with the raw amino-acid sequence, 360 residues long: 3-isopropylmalate dehydrogenase (360 aa).

Residue 76–89 (GPKWDKIERDIRPE) participates in NAD(+) binding. Arg96, Arg106, Arg134, and Asp224 together coordinate substrate. Asp224, Asp248, and Asp252 together coordinate Mg(2+). 282 to 294 (GSAPDIAGLGIAN) serves as a coordination point for NAD(+).

The protein belongs to the isocitrate and isopropylmalate dehydrogenases family. LeuB type 1 subfamily. As to quaternary structure, homodimer. It depends on Mg(2+) as a cofactor. Requires Mn(2+) as cofactor.

It localises to the cytoplasm. It carries out the reaction (2R,3S)-3-isopropylmalate + NAD(+) = 4-methyl-2-oxopentanoate + CO2 + NADH. The protein operates within amino-acid biosynthesis; L-leucine biosynthesis; L-leucine from 3-methyl-2-oxobutanoate: step 3/4. Its function is as follows. Catalyzes the oxidation of 3-carboxy-2-hydroxy-4-methylpentanoate (3-isopropylmalate) to 3-carboxy-4-methyl-2-oxopentanoate. The product decarboxylates to 4-methyl-2 oxopentanoate. This Pseudomonas putida (strain ATCC 47054 / DSM 6125 / CFBP 8728 / NCIMB 11950 / KT2440) protein is 3-isopropylmalate dehydrogenase.